A 323-amino-acid chain; its full sequence is Glutathione synthetase (323 aa).

In terms of domain architecture, ATP-grasp spans 133 to 317; the sequence is KMYALQFQSV…IGDQTIAALE (185 aa). 159–215 is an ATP binding site; the sequence is LDELRAAVLKPLGGKAGEGILFLDPGDRNFNSLVEISTQQGQLPVMVQQYLPEAKDG. Positions 288 and 290 each coordinate Mg(2+).

The protein belongs to the prokaryotic GSH synthase family. The cofactor is Mg(2+). Mn(2+) serves as cofactor.

It catalyses the reaction gamma-L-glutamyl-L-cysteine + glycine + ATP = glutathione + ADP + phosphate + H(+). It participates in sulfur metabolism; glutathione biosynthesis; glutathione from L-cysteine and L-glutamate: step 2/2. The sequence is that of Glutathione synthetase from Synechococcus elongatus (strain ATCC 33912 / PCC 7942 / FACHB-805) (Anacystis nidulans R2).